The primary structure comprises 81 residues: ATP synthase subunit c (81 aa).

Helical transmembrane passes span 7 to 27 and 57 to 77; these read AASV…PGIG and LAFM…LLFA.

It belongs to the ATPase C chain family. As to quaternary structure, F-type ATPases have 2 components, F(1) - the catalytic core - and F(0) - the membrane proton channel. F(1) has five subunits: alpha(3), beta(3), gamma(1), delta(1), epsilon(1). F(0) has four main subunits: a(1), b(1), b'(1) and c(10-14). The alpha and beta chains form an alternating ring which encloses part of the gamma chain. F(1) is attached to F(0) by a central stalk formed by the gamma and epsilon chains, while a peripheral stalk is formed by the delta, b and b' chains.

Its subcellular location is the cellular thylakoid membrane. F(1)F(0) ATP synthase produces ATP from ADP in the presence of a proton or sodium gradient. F-type ATPases consist of two structural domains, F(1) containing the extramembraneous catalytic core and F(0) containing the membrane proton channel, linked together by a central stalk and a peripheral stalk. During catalysis, ATP synthesis in the catalytic domain of F(1) is coupled via a rotary mechanism of the central stalk subunits to proton translocation. Functionally, key component of the F(0) channel; it plays a direct role in translocation across the membrane. A homomeric c-ring of between 10-14 subunits forms the central stalk rotor element with the F(1) delta and epsilon subunits. This chain is ATP synthase subunit c, found in Synechococcus sp. (strain CC9311).